The following is a 242-amino-acid chain: Large ribosomal subunit protein uL1 (242 aa).

It belongs to the universal ribosomal protein uL1 family. Part of the 50S ribosomal subunit.

Binds directly to 23S rRNA. The L1 stalk is quite mobile in the ribosome, and is involved in E site tRNA release. In terms of biological role, protein L1 is also a translational repressor protein, it controls the translation of the L11 operon by binding to its mRNA. The protein is Large ribosomal subunit protein uL1 of Kitasatospora aureofaciens (Streptomyces aureofaciens).